We begin with the raw amino-acid sequence, 158 residues long: 2-C-methyl-D-erythritol 2,4-cyclodiphosphate synthase (158 aa).

Positions 9 and 11 each coordinate a divalent metal cation. 4-CDP-2-C-methyl-D-erythritol 2-phosphate-binding positions include 9–11 and 35–36; these read DVH and HS. His-43 is a binding site for a divalent metal cation. 4-CDP-2-C-methyl-D-erythritol 2-phosphate is bound by residues 57-59, 62-66, 133-136, Phe-140, and Arg-143; these read DLG, FPDTD, and TTTE.

It belongs to the IspF family. Homotrimer. A divalent metal cation is required as a cofactor.

It catalyses the reaction 4-CDP-2-C-methyl-D-erythritol 2-phosphate = 2-C-methyl-D-erythritol 2,4-cyclic diphosphate + CMP. It functions in the pathway isoprenoid biosynthesis; isopentenyl diphosphate biosynthesis via DXP pathway; isopentenyl diphosphate from 1-deoxy-D-xylulose 5-phosphate: step 4/6. Its function is as follows. Involved in the biosynthesis of isopentenyl diphosphate (IPP) and dimethylallyl diphosphate (DMAPP), two major building blocks of isoprenoid compounds. Catalyzes the conversion of 4-diphosphocytidyl-2-C-methyl-D-erythritol 2-phosphate (CDP-ME2P) to 2-C-methyl-D-erythritol 2,4-cyclodiphosphate (ME-CPP) with a corresponding release of cytidine 5-monophosphate (CMP). The polypeptide is 2-C-methyl-D-erythritol 2,4-cyclodiphosphate synthase (Desulfitobacterium hafniense (strain DSM 10664 / DCB-2)).